The sequence spans 128 residues: Ribosome-binding factor A (128 aa).

Belongs to the RbfA family. Monomer. Binds 30S ribosomal subunits, but not 50S ribosomal subunits or 70S ribosomes.

It localises to the cytoplasm. Functionally, one of several proteins that assist in the late maturation steps of the functional core of the 30S ribosomal subunit. Associates with free 30S ribosomal subunits (but not with 30S subunits that are part of 70S ribosomes or polysomes). Required for efficient processing of 16S rRNA. May interact with the 5'-terminal helix region of 16S rRNA. In Haemophilus influenzae (strain 86-028NP), this protein is Ribosome-binding factor A.